The following is a 71-amino-acid chain: Large ribosomal subunit protein bL31 (71 aa).

Zn(2+) contacts are provided by Cys-16, Cys-18, Cys-37, and Cys-40.

It belongs to the bacterial ribosomal protein bL31 family. Type A subfamily. As to quaternary structure, part of the 50S ribosomal subunit. The cofactor is Zn(2+).

Its function is as follows. Binds the 23S rRNA. The chain is Large ribosomal subunit protein bL31 from Mannheimia succiniciproducens (strain KCTC 0769BP / MBEL55E).